Consider the following 903-residue polypeptide: Alanine--tRNA ligase (903 aa).

Zn(2+) contacts are provided by histidine 591, histidine 595, cysteine 695, and histidine 699.

This sequence belongs to the class-II aminoacyl-tRNA synthetase family. It depends on Zn(2+) as a cofactor.

It is found in the cytoplasm. The enzyme catalyses tRNA(Ala) + L-alanine + ATP = L-alanyl-tRNA(Ala) + AMP + diphosphate. Its function is as follows. Catalyzes the attachment of alanine to tRNA(Ala) in a two-step reaction: alanine is first activated by ATP to form Ala-AMP and then transferred to the acceptor end of tRNA(Ala). Also edits incorrectly charged Ser-tRNA(Ala) and Gly-tRNA(Ala) via its editing domain. This is Alanine--tRNA ligase from Methanosphaera stadtmanae (strain ATCC 43021 / DSM 3091 / JCM 11832 / MCB-3).